Consider the following 650-residue polypeptide: DNA mismatch repair protein MutL (650 aa).

Disordered stretches follow at residues 358 to 392 (EASQAALPVTPQPRPALTPGHPDPPPQAQLQQPLV) and 408 to 448 (QPRP…QSAA). Residues 367–384 (TPQPRPALTPGHPDPPPQ) show a composition bias toward pro residues. Residues 430 to 444 (PYAPIAAAPVPASEP) are compositionally biased toward low complexity.

It belongs to the DNA mismatch repair MutL/HexB family.

This protein is involved in the repair of mismatches in DNA. It is required for dam-dependent methyl-directed DNA mismatch repair. May act as a 'molecular matchmaker', a protein that promotes the formation of a stable complex between two or more DNA-binding proteins in an ATP-dependent manner without itself being part of a final effector complex. This chain is DNA mismatch repair protein MutL, found in Geobacter sp. (strain M21).